Here is an 854-residue protein sequence, read N- to C-terminus: Probable inactive serine/threonine-protein kinase DDB_G0274821 (854 aa).

The 266-residue stretch at 1–266 (MPIKESFKRI…WPKLFIHPFF (266 aa)) folds into the Protein kinase domain. 2 N-linked (GlcNAc...) asparagine glycosylation sites follow: asparagine 32 and asparagine 106. Residues 116–135 (NNNNNNNNNNNNNNNNNNNN) form a disordered region. 4 N-linked (GlcNAc...) asparagine glycosylation sites follow: asparagine 163, asparagine 279, asparagine 283, and asparagine 290. The disordered stretch occupies residues 289–331 (LNKSSSSSSSSSSSSSSSSSSSSSSSLSFQQQQQPNNISSPNL). Over residues 292–322 (SSSSSSSSSSSSSSSSSSSSSSSLSFQQQQQ) the composition is skewed to low complexity. Asparagine 325, asparagine 347, and asparagine 365 each carry an N-linked (GlcNAc...) asparagine glycan. The interval 384–408 (IISPNRPSSPPLSSLSSCSSSSSSS) is disordered. Residue asparagine 414 is glycosylated (N-linked (GlcNAc...) asparagine). Residues 425–446 (NNNNNNNNNNNNNNNNNNNNNN) form a disordered region. Asparagine 520, asparagine 541, and asparagine 620 each carry an N-linked (GlcNAc...) asparagine glycan. A disordered region spans residues 627-650 (SSPPPSSSSSSSSPSSPSSTSPSL). The segment covering 633–650 (SSSSSSSPSSPSSTSPSL) has biased composition (low complexity). Residue asparagine 757 is glycosylated (N-linked (GlcNAc...) asparagine). A helical membrane pass occupies residues 770–792 (HWRVQISFLNILFILITINNNFI).

The protein belongs to the protein kinase superfamily. Ser/Thr protein kinase family.

The protein resides in the membrane. This chain is Probable inactive serine/threonine-protein kinase DDB_G0274821, found in Dictyostelium discoideum (Social amoeba).